The chain runs to 210 residues: Glutathione S-transferase P (210 aa).

The GST N-terminal domain maps to 2-81 (ASYTIVYFPV…HLGRTLGLYG (80 aa)). Tyr-4 carries the phosphotyrosine; by EGFR modification. Residues Tyr-8, Arg-14, Trp-39, Lys-45, and 52 to 53 (QL) contribute to the glutathione site. Thr-62 bears the Phosphothreonine mark. 65-66 (QS) contacts glutathione. The GST C-terminal domain occupies 83 to 204 (DQREAALVDM…ASPEHVNRPI (122 aa)). Lys-103 and Lys-116 each carry N6-succinyllysine. Lys-128 is modified (N6-acetyllysine).

Belongs to the GST superfamily. Pi family. In terms of assembly, homodimer. Interacts with CDK5.

The protein resides in the cytoplasm. The protein localises to the mitochondrion. It localises to the nucleus. The enzyme catalyses RX + glutathione = an S-substituted glutathione + a halide anion + H(+). The catalysed reaction is prostaglandin J2 + glutathione = prostaglandin J2-S-(R)-glutathione. It carries out the reaction prostaglandin J2 + glutathione = prostaglandin J2-S-(S)-glutathione. It catalyses the reaction prostaglandin A2 + glutathione = prostaglandin A2-S-(S)-glutathione. The enzyme catalyses 11(S)-hydroxy-14(S),15(S)-epoxy-(5Z,8Z,12E)-eicosatrienoate + glutathione = (11S,15S)-dihydroxy-14(R)-S-glutathionyl-(5Z,8Z,12E)-eicosatrienoate. Conjugation of reduced glutathione to a wide number of exogenous and endogenous hydrophobic electrophiles. Involved in the formation of glutathione conjugates of both prostaglandin A2 (PGA2) and prostaglandin J2 (PGJ2). Participates in the formation of novel hepoxilin regioisomers. Negatively regulates CDK5 activity via p25/p35 translocation to prevent neurodegeneration. The sequence is that of Glutathione S-transferase P (GSTP1) from Capra hircus (Goat).